A 430-amino-acid polypeptide reads, in one-letter code: Methylthioribose kinase 1 (430 aa).

ATP is bound by residues 52 to 56 (DGNLN), K71, and 125 to 127 (RYI). N56 contributes to the substrate binding site. Substrate is bound at residue D246. Position 263 to 265 (263 to 265 (DPE)) interacts with ATP. A substrate-binding site is contributed by R373.

It belongs to the methylthioribose kinase family. As to quaternary structure, homodimer.

It carries out the reaction 5-(methylsulfanyl)-D-ribose + ATP = 5-(methylsulfanyl)-alpha-D-ribose 1-phosphate + ADP + H(+). Its pathway is amino-acid biosynthesis; L-methionine biosynthesis via salvage pathway; S-methyl-5-thio-alpha-D-ribose 1-phosphate from S-methyl-5'-thioadenosine (hydrolase route): step 2/2. Its function is as follows. Catalyzes the phosphorylation of methylthioribose into methylthioribose-1-phosphate. This chain is Methylthioribose kinase 1, found in Oryza sativa subsp. japonica (Rice).